The chain runs to 577 residues: Protein NRT1/ PTR FAMILY 6.2 (577 aa).

The next 12 membrane-spanning stretches (helical) occupy residues 28-48 (WITAALILGIEVVERLSTMGI), 74-94 (FMGTSFLLCLLGGFLADSFLG), 96-116 (FKTIGIFSTIQALGTGALAVA), 134-154 (IPATAFQMTILYVSLYLIALG), 183-203 (FFFNRFFFFISMGTLLAVTVL), 214-234 (WAYGICTVSMAIAIVIFLCGT), 332-352 (LLPIWATTIIFWTTYAQMITF), 369-389 (IPAGSLTVFFVAAILITLAVY), 409-429 (LQRIAIGLVLSTAGMAAAALV), 447-467 (ISVFLLVPQFFLVGAGEAFIY), 488-508 (GLFLTTLSLGFFVSSFLVSIV), and 535-555 (WLLVILSGINFVVYIICALWF).

The protein belongs to the major facilitator superfamily. Proton-dependent oligopeptide transporter (POT/PTR) (TC 2.A.17) family. In terms of tissue distribution, expressed in shoots, leaves, flowers and siliques. Expressed in leaf petiole.

Its subcellular location is the membrane. In terms of biological role, low-affinity proton-dependent nitrate transporter. Not involved in dipeptides transport. The protein is Protein NRT1/ PTR FAMILY 6.2 (NPF6.2) of Arabidopsis thaliana (Mouse-ear cress).